The chain runs to 175 residues: Bifunctional protein PyrR (175 aa).

Residues 40-41, Arg-85, 102-110, Arg-135, and Val-159 each bind substrate; these read TR and DDVLYTGRT. Residues 98-110 carry the PRPP-binding motif; that stretch reads VVIIDDVLYTGRT.

It belongs to the purine/pyrimidine phosphoribosyltransferase family. PyrR subfamily. Homodimer and homohexamer; in equilibrium.

The catalysed reaction is UMP + diphosphate = 5-phospho-alpha-D-ribose 1-diphosphate + uracil. Its function is as follows. Regulates transcriptional attenuation of the pyrimidine nucleotide (pyr) operon by binding in a uridine-dependent manner to specific sites on pyr mRNA. This disrupts an antiterminator hairpin in the RNA and favors formation of a downstream transcription terminator, leading to a reduced expression of downstream genes. Also displays a weak uracil phosphoribosyltransferase activity which is not physiologically significant. This is Bifunctional protein PyrR from Staphylococcus epidermidis (strain ATCC 35984 / DSM 28319 / BCRC 17069 / CCUG 31568 / BM 3577 / RP62A).